Here is a 211-residue protein sequence, read N- to C-terminus: Thiamine-phosphate synthase (211 aa).

Residues 37–41 (QLRIK) and Asn69 each bind 4-amino-2-methyl-5-(diphosphooxymethyl)pyrimidine. Mg(2+) contacts are provided by Asp70 and Asp89. A 4-amino-2-methyl-5-(diphosphooxymethyl)pyrimidine-binding site is contributed by Ser108. Residue 134–136 (TQT) coordinates 2-[(2R,5Z)-2-carboxy-4-methylthiazol-5(2H)-ylidene]ethyl phosphate. Lys137 provides a ligand contact to 4-amino-2-methyl-5-(diphosphooxymethyl)pyrimidine. Residues Gly166 and 186–187 (VS) each bind 2-[(2R,5Z)-2-carboxy-4-methylthiazol-5(2H)-ylidene]ethyl phosphate.

Belongs to the thiamine-phosphate synthase family. Requires Mg(2+) as cofactor.

The catalysed reaction is 2-[(2R,5Z)-2-carboxy-4-methylthiazol-5(2H)-ylidene]ethyl phosphate + 4-amino-2-methyl-5-(diphosphooxymethyl)pyrimidine + 2 H(+) = thiamine phosphate + CO2 + diphosphate. It carries out the reaction 2-(2-carboxy-4-methylthiazol-5-yl)ethyl phosphate + 4-amino-2-methyl-5-(diphosphooxymethyl)pyrimidine + 2 H(+) = thiamine phosphate + CO2 + diphosphate. It catalyses the reaction 4-methyl-5-(2-phosphooxyethyl)-thiazole + 4-amino-2-methyl-5-(diphosphooxymethyl)pyrimidine + H(+) = thiamine phosphate + diphosphate. It functions in the pathway cofactor biosynthesis; thiamine diphosphate biosynthesis; thiamine phosphate from 4-amino-2-methyl-5-diphosphomethylpyrimidine and 4-methyl-5-(2-phosphoethyl)-thiazole: step 1/1. Functionally, condenses 4-methyl-5-(beta-hydroxyethyl)thiazole monophosphate (THZ-P) and 2-methyl-4-amino-5-hydroxymethyl pyrimidine pyrophosphate (HMP-PP) to form thiamine monophosphate (TMP). The sequence is that of Thiamine-phosphate synthase from Salmonella paratyphi B (strain ATCC BAA-1250 / SPB7).